Reading from the N-terminus, the 2118-residue chain is Cilia- and flagella-associated protein 65 (2118 aa).

The chain crosses the membrane as a helical span at residues 6–26; the sequence is GSLRALLLAAAAAAAAAAGAV. One can recognise an MSP domain in the interval 615–736; that stretch reads FLHSNPEFGP…HTPRLTTDLP (122 aa). Disordered regions lie at residues 1007–1029, 1764–1909, and 1924–1958; these read APLL…LDAG, SGGS…DDFA, and AGGG…APPR. Residues 1825–1834 show a composition bias toward gly residues; it reads GGAGGAPGGD. Low complexity predominate over residues 1840–1849; that stretch reads RPGTPSMTAA. Residues 1850–1859 are compositionally biased toward basic residues; the sequence is AHHHHHHPRH. Low complexity-rich tracts occupy residues 1892 to 1902 and 1936 to 1949; these read SISGAPDPDSA and PGGS…ELAP. Residues 2016-2045 are a coiled coil; that stretch reads AVRAAAEAARAEAEARAAAEAATKAAAEAE.

Belongs to the CFAP65 family.

It localises to the cell projection. It is found in the cilium. The protein resides in the flagellum membrane. Its subcellular location is the cytoplasm. Functionally, may play a role in flagellar formation and mobility. The sequence is that of Cilia- and flagella-associated protein 65 from Chlamydomonas reinhardtii (Chlamydomonas smithii).